Reading from the N-terminus, the 299-residue chain is Dye-decolorizing peroxidase YfeX (299 aa).

Aspartate 143 functions as the Proton acceptor in the catalytic mechanism. Histidine 215 lines the heme pocket.

This sequence belongs to the DyP-type peroxidase family. Requires heme b as cofactor.

The protein localises to the cytoplasm. Its function is as follows. Has both general peroxidase activity and dye-decolorizing activity. Can catalyze the oxidation of both protoporphyrinogen IX and coproporphyrinogen III to their corresponding porphyrins. Also efficiently decolorizes the dyes alizarin red and Cibacron blue F3GA. This is Dye-decolorizing peroxidase YfeX (yfeX) from Escherichia coli (strain K12).